Consider the following 292-residue polypeptide: N-acetylneuraminate lyase (292 aa).

Aceneuramate contacts are provided by Ser-47 and Thr-48. The Proton donor role is filled by Tyr-136. The active-site Schiff-base intermediate with substrate is the Lys-164. The aceneuramate site is built by Thr-166, Gly-188, Asp-190, Glu-191, and Ser-207.

The protein belongs to the DapA family. NanA subfamily. As to quaternary structure, homotetramer.

Its subcellular location is the cytoplasm. It carries out the reaction aceneuramate = aldehydo-N-acetyl-D-mannosamine + pyruvate. Its pathway is amino-sugar metabolism; N-acetylneuraminate degradation; D-fructose 6-phosphate from N-acetylneuraminate: step 1/5. In terms of biological role, catalyzes the reversible aldol cleavage of N-acetylneuraminic acid (sialic acid; Neu5Ac) to form pyruvate and N-acetylmannosamine (ManNAc) via a Schiff base intermediate. The sequence is that of N-acetylneuraminate lyase from Actinobacillus pleuropneumoniae serotype 3 (strain JL03).